The following is a 55-amino-acid chain: Metallothionein-1 (55 aa).

The protein belongs to the metallothionein superfamily. Type 11 family.

The chain is Metallothionein-1 (MTP1) from Yarrowia lipolytica (strain CLIB 122 / E 150) (Yeast).